We begin with the raw amino-acid sequence, 563 residues long: Arginine--tRNA ligase (563 aa).

A 'HIGH' region motif is present at residues 119-129; it reads ANPTGPLHVGR.

The protein belongs to the class-I aminoacyl-tRNA synthetase family.

The protein localises to the cytoplasm. It catalyses the reaction tRNA(Arg) + L-arginine + ATP = L-arginyl-tRNA(Arg) + AMP + diphosphate. The polypeptide is Arginine--tRNA ligase (Methanocella arvoryzae (strain DSM 22066 / NBRC 105507 / MRE50)).